The following is a 286-amino-acid chain: Beta-lactamase SHV-1 (286 aa).

A signal peptide spans 1-21 (MRYIRLCIISLLATLPLAVHA). Serine 66 serves as the catalytic Acyl-ester intermediate. Cysteine 73 and cysteine 119 are joined by a disulfide. Catalysis depends on glutamate 164, which acts as the Proton acceptor. 230-232 (KTG) contributes to the substrate binding site.

The protein belongs to the class-A beta-lactamase family.

It catalyses the reaction a beta-lactam + H2O = a substituted beta-amino acid. The polypeptide is Beta-lactamase SHV-1 (bla) (Escherichia coli).